Here is a 378-residue protein sequence, read N- to C-terminus: Ribosomal RNA large subunit methyltransferase G (378 aa).

It belongs to the methyltransferase superfamily. RlmG family.

It localises to the cytoplasm. It carries out the reaction guanosine(1835) in 23S rRNA + S-adenosyl-L-methionine = N(2)-methylguanosine(1835) in 23S rRNA + S-adenosyl-L-homocysteine + H(+). Specifically methylates the guanine in position 1835 (m2G1835) of 23S rRNA. The sequence is that of Ribosomal RNA large subunit methyltransferase G from Shigella flexneri serotype 5b (strain 8401).